The sequence spans 650 residues: DNA mismatch repair protein MutL (650 aa).

Positions 374-420 (SSLPDTQRSQRQPEKAASGQRSSVDAGLSQGSSAHRASQTGLGQSGN) are disordered. Residues 392-420 (GQRSSVDAGLSQGSSAHRASQTGLGQSGN) are compositionally biased toward polar residues.

It belongs to the DNA mismatch repair MutL/HexB family.

In terms of biological role, this protein is involved in the repair of mismatches in DNA. It is required for dam-dependent methyl-directed DNA mismatch repair. May act as a 'molecular matchmaker', a protein that promotes the formation of a stable complex between two or more DNA-binding proteins in an ATP-dependent manner without itself being part of a final effector complex. The protein is DNA mismatch repair protein MutL of Shewanella amazonensis (strain ATCC BAA-1098 / SB2B).